Reading from the N-terminus, the 427-residue chain is Peptidase B (427 aa).

K195 and D200 together coordinate Mn(2+). K207 is a catalytic residue. Mn(2+)-binding residues include D218, D277, and E279. Residue R281 is part of the active site.

It belongs to the peptidase M17 family. As to quaternary structure, homohexamer. Mn(2+) is required as a cofactor.

The protein resides in the cytoplasm. It carries out the reaction Release of an N-terminal amino acid, Xaa, from a peptide or arylamide. Xaa is preferably Glu or Asp but may be other amino acids, including Leu, Met, His, Cys and Gln.. Its function is as follows. Probably plays an important role in intracellular peptide degradation. This Salmonella dublin (strain CT_02021853) protein is Peptidase B.